A 290-amino-acid polypeptide reads, in one-letter code: Shikimate dehydrogenase (NADP(+)) (290 aa).

Shikimate is bound by residues 20-22 and T67; that span reads SLS. K71 (proton acceptor) is an active-site residue. Residues N92 and D107 each contribute to the shikimate site. NADP(+) contacts are provided by residues 132–136 and M228; that span reads GAGGA. Y230 provides a ligand contact to shikimate. G251 provides a ligand contact to NADP(+).

This sequence belongs to the shikimate dehydrogenase family. In terms of assembly, homodimer.

It catalyses the reaction shikimate + NADP(+) = 3-dehydroshikimate + NADPH + H(+). It functions in the pathway metabolic intermediate biosynthesis; chorismate biosynthesis; chorismate from D-erythrose 4-phosphate and phosphoenolpyruvate: step 4/7. Its function is as follows. Involved in the biosynthesis of the chorismate, which leads to the biosynthesis of aromatic amino acids. Catalyzes the reversible NADPH linked reduction of 3-dehydroshikimate (DHSA) to yield shikimate (SA). The chain is Shikimate dehydrogenase (NADP(+)) from Geobacter sp. (strain M21).